Consider the following 304-residue polypeptide: Acetyl-coenzyme A carboxylase carboxyl transferase subunit beta (304 aa).

Residues 23–292 (VWTKCDSCGQ…PNPEAPREGV (270 aa)) enclose the CoA carboxyltransferase N-terminal domain. Positions 27, 30, 46, and 49 each coordinate Zn(2+). A C4-type zinc finger spans residues 27 to 49 (CDSCGQVLYRAELERNLEVCPKC). Residues 285–304 (PEAPREGVVVPPVPDQEPEA) are disordered. Residues 295 to 304 (PPVPDQEPEA) show a composition bias toward pro residues.

The protein belongs to the AccD/PCCB family. In terms of assembly, acetyl-CoA carboxylase is a heterohexamer composed of biotin carboxyl carrier protein (AccB), biotin carboxylase (AccC) and two subunits each of ACCase subunit alpha (AccA) and ACCase subunit beta (AccD). Requires Zn(2+) as cofactor.

It localises to the cytoplasm. The catalysed reaction is N(6)-carboxybiotinyl-L-lysyl-[protein] + acetyl-CoA = N(6)-biotinyl-L-lysyl-[protein] + malonyl-CoA. It participates in lipid metabolism; malonyl-CoA biosynthesis; malonyl-CoA from acetyl-CoA: step 1/1. In terms of biological role, component of the acetyl coenzyme A carboxylase (ACC) complex. Biotin carboxylase (BC) catalyzes the carboxylation of biotin on its carrier protein (BCCP) and then the CO(2) group is transferred by the transcarboxylase to acetyl-CoA to form malonyl-CoA. The sequence is that of Acetyl-coenzyme A carboxylase carboxyl transferase subunit beta from Escherichia coli O6:H1 (strain CFT073 / ATCC 700928 / UPEC).